Consider the following 109-residue polypeptide: SRA stem-loop-interacting RNA-binding protein, mitochondrial (109 aa).

Ser-15 carries the phosphoserine modification. The RRM domain maps to 19–103 (PVAFVRRIPW…RRPKLPQTSD (85 aa)). Thr-101 carries the phosphothreonine modification. Ser-102 bears the Phosphoserine mark.

Ubiquitously expressed, with highest level in heart, liver, skeletal muscle and testis.

Its subcellular location is the mitochondrion. It is found in the nucleus. In terms of biological role, RNA-binding protein that acts as a nuclear receptor corepressor. Probably acts by binding the SRA RNA, and repressing the SRA-mediated nuclear receptor coactivation. Binds the STR7 loop of SRA RNA. Also able to repress glucocorticoid (GR), androgen (AR), thyroid (TR) and VDR-mediated transactivation. The chain is SRA stem-loop-interacting RNA-binding protein, mitochondrial (SLIRP) from Homo sapiens (Human).